Consider the following 201-residue polypeptide: MRLLTLEEGTFAVRYARAVIENYLAGKKIVIESYPEVFNEKRGCFCTLHTYPDKELRGCIGIPEPIMPLIEALEEAAISAATKDPRFPPVTLEEMDSIVVEVSILTPPELIKVNHPKEYLEKIKIGRDGLIIEYGFYRGLLLPQVPVEYGWDVEEYLAHLCLKAGLPPDMWLAEGVKIYRFEAQIFEEVEPRGEVIEKKLL.

Residues 7 to 197 (EEGTFAVRYA…EVEPRGEVIE (191 aa)) form the AMMECR1 domain.

In Methanocaldococcus jannaschii (strain ATCC 43067 / DSM 2661 / JAL-1 / JCM 10045 / NBRC 100440) (Methanococcus jannaschii), this protein is Protein MJ0810.